Consider the following 489-residue polypeptide: Sphingolipid C9-methyltransferase (489 aa).

The next 2 membrane-spanning stretches (helical) occupy residues 29–49 (GAKN…PLFV) and 59–79 (TFIF…WTVL). S-adenosyl-L-methionine contacts are provided by residues 202–203 (YT), 239–247 (LLDLGCGWG), 265–270 (TLGKNQ), and 295–296 (YR).

It belongs to the CFA/CMAS family.

Its subcellular location is the membrane. It catalyses the reaction a (4E,8E)-4-sphinga-4,8-dienine ceramide + S-adenosyl-L-methionine = a 9-methyl-(4E,8E)-sphinga-4,8-dienine ceramide + S-adenosyl-L-homocysteine + H(+). Its pathway is lipid metabolism; sphingolipid metabolism. In terms of biological role, catalyzes methylation of the sphingoid base component of glucosylceramides (GluCers) at the C9-position. Sphingolipid C9-methylation requires 4,8-desaturated ceramides as substrates. Glucosylceramides play important roles in growth, differentiation and pathogenicity. The methyl group at the C9-position distinguishes fungal glucosylceramides from those of plants and animals, and may thus play a role in host-pathogen interactions enabling the host to recognize the fungal attack and initiate specific defense responses. The polypeptide is Sphingolipid C9-methyltransferase (Komagataella phaffii (strain GS115 / ATCC 20864) (Yeast)).